We begin with the raw amino-acid sequence, 457 residues long: Cystathionine beta-lyase, chloroplastic (457 aa).

The transit peptide at 1 to 51 (MFSRPFVTPVTIDLQVKSITAGNMWEGLGFYKPANSKSNQMICSKGFRLNC) directs the protein to the chloroplast. Positions 120, 122, 150, 151, 268, and 270 each coordinate pyridoxal 5'-phosphate. Lys-271 carries the N6-(pyridoxal phosphate)lysine modification.

It belongs to the trans-sulfuration enzymes family. As to quaternary structure, forms homodimers. May form homotetramers from two homodimers. Pyridoxal 5'-phosphate serves as cofactor.

Its subcellular location is the plastid. It is found in the chloroplast. It carries out the reaction L,L-cystathionine + H2O = L-homocysteine + pyruvate + NH4(+). The catalysed reaction is an S-substituted L-cysteine + H2O = a thiol + pyruvate + NH4(+). In terms of biological role, catalyzes the degradation of cystathionine. The polypeptide is Cystathionine beta-lyase, chloroplastic (Mimosa pudica (Sensitive plant)).